The chain runs to 201 residues: Cytochrome c oxidase assembly protein CtaG (201 aa).

Over 1–12 (MTDQGENEKKQR) the chain is Cytoplasmic. A helical; Signal-anchor for type II membrane protein transmembrane segment spans residues 13 to 35 (RSNATIAVACLSFFVCMIGAAYA). The Periplasmic segment spans residues 36–201 (SVPLYRIFCQ…KAVGSTRNGG (166 aa)).

This sequence belongs to the COX11/CtaG family.

Its subcellular location is the cell inner membrane. In terms of biological role, exerts its effect at some terminal stage of cytochrome c oxidase synthesis, probably by being involved in the insertion of the copper B into subunit I. This Brucella suis biovar 1 (strain 1330) protein is Cytochrome c oxidase assembly protein CtaG.